The following is a 452-amino-acid chain: Glycine receptor subunit alpha-2 (452 aa).

The first 27 residues, 1–27 (MNRQLVNILTALFAFFLGTNHFREAFC), serve as a signal peptide directing secretion. Over 28–256 (KDHDSRSGKH…KFHLERQMGY (229 aa)) the chain is Extracellular. A glycan (N-linked (GlcNAc...) asparagine) is linked at Asn-72. Position 99 (Arg-99) interacts with glycine. Arg-99 is a binding site for strychnine. A glycan (N-linked (GlcNAc...) asparagine) is linked at Asn-103. Ser-163 is a glycine binding site. A disulfide bridge connects residues Cys-172 and Cys-186. Zn(2+) is bound by residues Glu-226 and Glu-228. A disulfide bond links Cys-232 and Cys-243. Residue Thr-238 participates in glycine binding. Zn(2+) is bound at residue His-249. Residues 257-278 (YLIQMYIPSLLIVILSWVSFWI) traverse the membrane as a helical segment. At 279 to 283 (NMDAA) the chain is on the cytoplasmic side. Residues 284 to 304 (PARVALGITTVLTMTTQSSGS) form a helical membrane-spanning segment. The Extracellular segment spans residues 305–315 (RASLPKVSYVK). Residues 316–336 (AIDIWMAVCLLFVFAALLEYA) form a helical membrane-spanning segment. The Cytoplasmic portion of the chain corresponds to 337–420 (AVNFVSRQHK…FVDRAKRIDT (84 aa)). The chain crosses the membrane as a helical span at residues 421–441 (ISRAAFPLAFLIFNIFYWITY). Residues 442–452 (KIIRHEDVHKK) are Extracellular-facing.

The protein belongs to the ligand-gated ion channel (TC 1.A.9) family. Glycine receptor (TC 1.A.9.3) subfamily. GLRA2 sub-subfamily. Interacts with GLRB. Heteropentamer composed of GLRA2 and GLRB; functional GLRB-GLRA2 heteropentamers contain four GLRA2 subunits and one GLRB subunit, although alternative subunit composition cannot be excluded. Homopentamer (in vitro). Both homopentamers and heteropentamers form functional ion channels, but their characteristics are subtly different.

The protein resides in the postsynaptic cell membrane. Its subcellular location is the synapse. It is found in the cell membrane. It localises to the cell projection. The catalysed reaction is chloride(in) = chloride(out). Channel opening is triggered by extracellular glycine. Channel opening is also triggered by taurine and beta-alanine. Inhibited by strychnine. Inhibited by picrotoxin. In terms of biological role, subunit of heteromeric glycine-gated chloride channels. Plays a role in synaptic plasticity. Contributes to the generation of inhibitory postsynaptic currents, and is involved in the down-regulation of neuronal excitability. Plays a role in cellular responses to ethanol. The protein is Glycine receptor subunit alpha-2 of Rattus norvegicus (Rat).